Reading from the N-terminus, the 136-residue chain is T-cell receptor beta chain V region LB2 (136 aa).

The first 21 residues, 1 to 21 (MNKWVFCWVTLCLLTVETTHG), serve as a signal peptide directing secretion. The interval 22–116 (DGGIITQTPK…EMTVFLCASS (95 aa)) is v segment. A disulfide bridge links cysteine 45 with cysteine 113. The tract at residues 117-120 (IRLA) is d segment. Residues 121 to 136 (SAETLYFGSGTRLTVL) form a j segment region.

This is T-cell receptor beta chain V region LB2 from Mus musculus (Mouse).